A 197-amino-acid polypeptide reads, in one-letter code: Protein shisa-4 (197 aa).

The signal sequence occupies residues 1 to 27 (MPPAGLRRAAPLTAIALLVLGAPLVLA). At 28-87 (GEDCLWYLDRNGSWHPGFNCEFFTFCCGTCYHRYCCRDLTLLITERQQKHCLAFSPKTIA) the chain is on the extracellular side. The helical transmembrane segment at 88 to 108 (GIASAVILFVAVVATTICCFL) threads the bilayer. The Cytoplasmic portion of the chain corresponds to 109 to 197 (CSCCYLYRRR…MPPQPSYPGA (89 aa)).

This sequence belongs to the shisa family.

The protein localises to the membrane. This is Protein shisa-4 (SHISA4) from Homo sapiens (Human).